The sequence spans 230 residues: Secretory carrier-associated membrane protein 4 (230 aa).

At 1 to 39 (MAGKENNFPPLPPFLPLKPCFYQDFSDEIPVEHQVLVKR) the chain is on the cytoplasmic side. Helical transmembrane passes span 40–60 (IYRL…ACLA), 61–81 (WWIA…LVLF), 106–126 (MTFF…AIGF), and 149–169 (VVML…AVTI). The Cytoplasmic segment spans residues 170–230 (VKVHRIYRGA…SYSSSGGHWP (61 aa)). Threonine 194 bears the Phosphothreonine mark.

It belongs to the SCAMP family.

The protein localises to the membrane. Probably involved in membrane protein trafficking. In Mus musculus (Mouse), this protein is Secretory carrier-associated membrane protein 4 (Scamp4).